Here is a 293-residue protein sequence, read N- to C-terminus: Homoserine kinase (293 aa).

Position 84–94 (84–94 (PFSRGLGSSSS)) interacts with ATP.

Belongs to the GHMP kinase family. Homoserine kinase subfamily.

It localises to the cytoplasm. It catalyses the reaction L-homoserine + ATP = O-phospho-L-homoserine + ADP + H(+). It functions in the pathway amino-acid biosynthesis; L-threonine biosynthesis; L-threonine from L-aspartate: step 4/5. Functionally, catalyzes the ATP-dependent phosphorylation of L-homoserine to L-homoserine phosphate. This Campylobacter fetus subsp. fetus (strain 82-40) protein is Homoserine kinase.